Here is a 1214-residue protein sequence, read N- to C-terminus: Spliceosome-associated protein 130 A (1214 aa).

The segment at 817–848 (AGGVGENGNGNADQMENGADDEDKEDPLSDEQ) is disordered. The segment covering 834–845 (GADDEDKEDPLS) has biased composition (acidic residues).

This sequence belongs to the RSE1 family. Identified in the spliceosome C complex. Component of the U11/U12 snRNPs that are part of the U12-type spliceosome. Component of splicing factor SF3B complex. In terms of tissue distribution, expressed at low levels in roots, leaves, inflorescence and, to a lower extent, in siliques.

It localises to the nucleus. Functionally, subunit of the splicing factor SF3B required for 'A' complex assembly formed by the stable binding of U2 snRNP to the branchpoint sequence (BPS) in pre-mRNA. Sequence independent binding of SF3A/SF3B complex upstream of the branch site is essential, it may anchor U2 snRNP to the pre-mRNA. May also be involved in the assembly of the 'E' complex. Also belongs to the minor U12-dependent spliceosome, which is involved in the splicing of rare class of nuclear pre-mRNA intron. Required for pollen and ovule development, especially during the transition from microspore to the bicellular stage in pollen development. Involved in the accumulation of QRT1 and QRT3. This Arabidopsis thaliana (Mouse-ear cress) protein is Spliceosome-associated protein 130 A.